Here is a 103-residue protein sequence, read N- to C-terminus: N(4)-acetylcytidine amidohydrolase (103 aa).

Residues Ile6–Gln94 form the ASCH domain. Lys21 functions as the Proton acceptor in the catalytic mechanism. Thr24 acts as the Nucleophile in catalysis. Glu74 serves as the catalytic Proton donor.

The protein belongs to the N(4)-acetylcytidine amidohydrolase family.

The enzyme catalyses N(4)-acetylcytidine + H2O = cytidine + acetate + H(+). It carries out the reaction N(4)-acetyl-2'-deoxycytidine + H2O = 2'-deoxycytidine + acetate + H(+). It catalyses the reaction N(4)-acetylcytosine + H2O = cytosine + acetate + H(+). In terms of biological role, catalyzes the hydrolysis of N(4)-acetylcytidine (ac4C). The polypeptide is N(4)-acetylcytidine amidohydrolase (Citrobacter koseri (strain ATCC BAA-895 / CDC 4225-83 / SGSC4696)).